A 224-amino-acid polypeptide reads, in one-letter code: PKHD-type hydroxylase SO_3913 (224 aa).

Residues glutamine 78–serine 176 enclose the Fe2OG dioxygenase domain. The Fe cation site is built by histidine 96, aspartate 98, and histidine 157. Residue arginine 167 coordinates 2-oxoglutarate.

It depends on Fe(2+) as a cofactor. L-ascorbate serves as cofactor.

The chain is PKHD-type hydroxylase SO_3913 from Shewanella oneidensis (strain ATCC 700550 / JCM 31522 / CIP 106686 / LMG 19005 / NCIMB 14063 / MR-1).